The chain runs to 225 residues: MTDYDRITANPHFDMLMSAHNHVQSTTQSALVPMVVEQSARGERSFDIFSRLLRERVIFLTGQVEDHMANLIVAQLLFLEAENPDKDIHLYINSPGGSVSAGLAIFDTMNFIKPEVSTICMGGAYSMGSFLLAAGQKGKRYALANARVMIHQPSGGAQGQATDIEINAREILKTRARLNEILAERTGQSVEKIEKDVERDYWLDAKEAKEYGLIDEVLERRPASL.

Ser126 functions as the Nucleophile in the catalytic mechanism. His151 is an active-site residue.

It belongs to the peptidase S14 family. As to quaternary structure, fourteen ClpP subunits assemble into 2 heptameric rings which stack back to back to give a disk-like structure with a central cavity, resembling the structure of eukaryotic proteasomes.

It localises to the cytoplasm. It catalyses the reaction Hydrolysis of proteins to small peptides in the presence of ATP and magnesium. alpha-casein is the usual test substrate. In the absence of ATP, only oligopeptides shorter than five residues are hydrolyzed (such as succinyl-Leu-Tyr-|-NHMec, and Leu-Tyr-Leu-|-Tyr-Trp, in which cleavage of the -Tyr-|-Leu- and -Tyr-|-Trp bonds also occurs).. Functionally, cleaves peptides in various proteins in a process that requires ATP hydrolysis. Has a chymotrypsin-like activity. Plays a major role in the degradation of misfolded proteins. The protein is ATP-dependent Clp protease proteolytic subunit of Psychrobacter arcticus (strain DSM 17307 / VKM B-2377 / 273-4).